Consider the following 360-residue polypeptide: Alanine racemase (360 aa).

Catalysis depends on Lys36, which acts as the Proton acceptor; specific for D-alanine. At Lys36 the chain carries N6-(pyridoxal phosphate)lysine. Arg132 is a substrate binding site. Tyr256 functions as the Proton acceptor; specific for L-alanine in the catalytic mechanism. Met304 lines the substrate pocket.

The protein belongs to the alanine racemase family. Pyridoxal 5'-phosphate serves as cofactor.

The catalysed reaction is L-alanine = D-alanine. Its pathway is amino-acid biosynthesis; D-alanine biosynthesis; D-alanine from L-alanine: step 1/1. Its function is as follows. Catalyzes the interconversion of L-alanine and D-alanine. May also act on other amino acids. In Haemophilus influenzae (strain ATCC 51907 / DSM 11121 / KW20 / Rd), this protein is Alanine racemase (alr).